The following is a 200-amino-acid chain: Putative hydrolase MhqD (200 aa).

Residues S100, D150, and H181 each act as charge relay system in the active site.

Belongs to the AB hydrolase superfamily. AB hydrolase 2 family.

Its subcellular location is the cytoplasm. Functionally, putative hydrolase that may contribute to the degradation of aromatic compounds. This Bacillus subtilis (strain 168) protein is Putative hydrolase MhqD (mhqD).